A 164-amino-acid polypeptide reads, in one-letter code: Lipoprotein signal peptidase (164 aa).

Transmembrane regions (helical) follow at residues tryptophan 12 to glutamine 32, tryptophan 70 to serine 90, and alanine 102 to valine 122. Active-site residues include aspartate 123 and aspartate 141. The helical transmembrane segment at phenylalanine 137–leucine 157 threads the bilayer.

It belongs to the peptidase A8 family.

The protein localises to the cell inner membrane. The enzyme catalyses Release of signal peptides from bacterial membrane prolipoproteins. Hydrolyzes -Xaa-Yaa-Zaa-|-(S,diacylglyceryl)Cys-, in which Xaa is hydrophobic (preferably Leu), and Yaa (Ala or Ser) and Zaa (Gly or Ala) have small, neutral side chains.. It participates in protein modification; lipoprotein biosynthesis (signal peptide cleavage). In terms of biological role, this protein specifically catalyzes the removal of signal peptides from prolipoproteins. The polypeptide is Lipoprotein signal peptidase (Escherichia coli O9:H4 (strain HS)).